The chain runs to 89 residues: Cytochrome b (89 aa).

2 consecutive transmembrane segments (helical) span residues 38-58 (FGPL…FLAM) and 82-89 (WLLRYMHA). Histidine 88 serves as a coordination point for heme b.

Belongs to the cytochrome b family. The main subunits of complex b-c1 are: cytochrome b, cytochrome c1 and the Rieske protein. Requires heme b as cofactor.

It is found in the mitochondrion inner membrane. Component of the ubiquinol-cytochrome c reductase complex (complex III or cytochrome b-c1 complex) that is part of the mitochondrial respiratory chain. The b-c1 complex mediates electron transfer from ubiquinol to cytochrome c. Contributes to the generation of a proton gradient across the mitochondrial membrane that is then used for ATP synthesis. This chain is Cytochrome b (MT-CYB), found in Brassica napus (Rape).